The primary structure comprises 100 residues: MKQEKLSLHDVLIRPIITEKALILREQRKYVFEVNPLANKNLVKEAVEKLFNVKVEKVNILNMKPKPKRRGIFEGKTRSWKKAVVTLKEGYTIKELEGEH.

This sequence belongs to the universal ribosomal protein uL23 family. In terms of assembly, part of the 50S ribosomal subunit. Contacts protein L29, and trigger factor when it is bound to the ribosome.

Its function is as follows. One of the early assembly proteins it binds 23S rRNA. One of the proteins that surrounds the polypeptide exit tunnel on the outside of the ribosome. Forms the main docking site for trigger factor binding to the ribosome. This Thermotoga maritima (strain ATCC 43589 / DSM 3109 / JCM 10099 / NBRC 100826 / MSB8) protein is Large ribosomal subunit protein uL23.